A 282-amino-acid polypeptide reads, in one-letter code: Probable transcription factor At1g66420 (282 aa).

The segment at 33-73 (SKKNEEFCGGSGKVQPSEMKRRSEGTSTDMTSKRAKKVSAE) is disordered.

Belongs to the GeBP family.

This chain is Probable transcription factor At1g66420, found in Arabidopsis thaliana (Mouse-ear cress).